Consider the following 122-residue polypeptide: Large ribosomal subunit protein uL14 (122 aa).

It belongs to the universal ribosomal protein uL14 family. As to quaternary structure, part of the 50S ribosomal subunit. Forms a cluster with proteins L3 and L19. In the 70S ribosome, L14 and L19 interact and together make contacts with the 16S rRNA in bridges B5 and B8.

Its function is as follows. Binds to 23S rRNA. Forms part of two intersubunit bridges in the 70S ribosome. This chain is Large ribosomal subunit protein uL14, found in Desulfosudis oleivorans (strain DSM 6200 / JCM 39069 / Hxd3) (Desulfococcus oleovorans).